The following is a 416-amino-acid chain: Tyrosine--tRNA ligase (416 aa).

The 'HIGH' region motif lies at 55-64 (PTGSEIHLGH). Residues 249 to 253 (KMSKS) carry the 'KMSKS' region motif. Lys-252 contacts ATP. The 65-residue stretch at 352–416 (TKAFHLLSSI…GKKTFRRISN (65 aa)) folds into the S4 RNA-binding domain.

The protein belongs to the class-I aminoacyl-tRNA synthetase family. TyrS type 2 subfamily. In terms of assembly, homodimer.

The protein resides in the cytoplasm. It carries out the reaction tRNA(Tyr) + L-tyrosine + ATP = L-tyrosyl-tRNA(Tyr) + AMP + diphosphate + H(+). In terms of biological role, catalyzes the attachment of tyrosine to tRNA(Tyr) in a two-step reaction: tyrosine is first activated by ATP to form Tyr-AMP and then transferred to the acceptor end of tRNA(Tyr). This is Tyrosine--tRNA ligase from Prochlorococcus marinus (strain SARG / CCMP1375 / SS120).